Consider the following 283-residue polypeptide: Digeranylgeranylglyceryl phosphate synthase (283 aa).

The next 8 helical transmembrane spans lie at 5–27, 37–57, 85–105, 128–148, 152–172, 203–223, 228–248, and 263–283; these read VEII…AILA, AMLA…YFDY, LLFI…DTWI, PLIG…FAGY, EGLI…MTTA, AIIA…LYIY, INYL…AVLL, and LKTG…TITF.

Belongs to the UbiA prenyltransferase family. DGGGP synthase subfamily. It depends on Mg(2+) as a cofactor.

Its subcellular location is the cell membrane. The catalysed reaction is sn-3-O-(geranylgeranyl)glycerol 1-phosphate + (2E,6E,10E)-geranylgeranyl diphosphate = 2,3-bis-O-(geranylgeranyl)-sn-glycerol 1-phosphate + diphosphate. Its pathway is membrane lipid metabolism; glycerophospholipid metabolism. Functionally, prenyltransferase that catalyzes the transfer of the geranylgeranyl moiety of geranylgeranyl diphosphate (GGPP) to the C2 hydroxyl of (S)-3-O-geranylgeranylglyceryl phosphate (GGGP). This reaction is the second ether-bond-formation step in the biosynthesis of archaeal membrane lipids. This chain is Digeranylgeranylglyceryl phosphate synthase, found in Methanobrevibacter smithii (strain ATCC 35061 / DSM 861 / OCM 144 / PS).